We begin with the raw amino-acid sequence, 355 residues long: 6-aminohexanoate-oligomer endohydrolase (355 aa).

Threonine 267 acts as the Nucleophile in catalysis.

It belongs to the peptidase S58 family. As to quaternary structure, heterotetramer composed of 4 alpha/beta heterodimers. Expressed as an inactive precursor that is cleaved autocatalytically at Asn266/Thr267 to generate an active enzyme composed of an alpha subunit and a beta subunit.

It carries out the reaction [N-(6-aminohexanoyl)]n + H2O = [N-(6-aminohexanoyl)]n-x + [N-(6-aminohexanoyl)]x.. Its pathway is xenobiotic degradation; nylon-6 oligomer degradation. Functionally, involved in the degradation of nylon-6 oligomers. Degrades cyclic and linear oligomers of 6-aminohexanoate (Ahx) with a degree of polymerization greater than three by an endo-type mode. Cannot use Ahx cyclic dimer or the Ahx linear dimer. The polypeptide is 6-aminohexanoate-oligomer endohydrolase (Kocuria sp. (strain KY2)).